A 347-amino-acid chain; its full sequence is GMP reductase (347 aa).

108-131 (ADFEKTKQILDLNPALNFVCIDVA) contributes to the NADP(+) binding site. Residues glycine 181 and glycine 183 each coordinate K(+). Cysteine 186 functions as the Thioimidate intermediate in the catalytic mechanism. 216-239 (IVSDGGCTTPGDVAKAFGGGADFV) contributes to the NADP(+) binding site.

This sequence belongs to the IMPDH/GMPR family. GuaC type 1 subfamily. In terms of assembly, homotetramer.

It carries out the reaction IMP + NH4(+) + NADP(+) = GMP + NADPH + 2 H(+). In terms of biological role, catalyzes the irreversible NADPH-dependent deamination of GMP to IMP. It functions in the conversion of nucleobase, nucleoside and nucleotide derivatives of G to A nucleotides, and in maintaining the intracellular balance of A and G nucleotides. The polypeptide is GMP reductase (Shigella flexneri serotype 5b (strain 8401)).